Consider the following 687-residue polypeptide: MAKDYLFEIGTEEIPAHVVPRSVKQLADRTRKFLKENGLKFKDIKTFSTPRRLTILVEDLAEKQDDIDEVKKGPAKKITQDADGNWTKAAQGFARGQGMTTDDIYFEELKGTEYAYVHVQKEGKKASDILLGMSDIIKAMTFPTKMRWDSNDFEFVRPIHWLVSLFGSDVIPVKILDITAGRKTQGHRFLGDSVVLANADDYEDALKDQYVIANAEERKDMIVNQMNELVKKNHWQIKPDRDLLEEVTYLVEYPTVFAGSFDEKYLNIPDEVLITSMKDNQRYFEVYDENGKLINHFIAVRNGNKDYLDNIISGNEKVLVARLDDAQFFYDEDRKYPLSHFVDRLKNVSFHDKIGSMAEKIQRVRMIGDYLAKRWDLPENVVTDFDRASELYKFDLVTQMVGEFAELQGVMGMHYARLAGEDEEVSVAIKEHYMPATAEGPLPETTVGSLLSVADKIDTIITFFGAGMIPTSSNDPYALRRYAYGIVRILLNEKWSLPFNEVLPEIINMLGGVTPAKLPKGDSEQEIADFIRDRVKQYLQKNKFKYDIVDAVLASSQQDPSQILAAANVLQLHHDDEEFKPVVESLTRINNILKKAKFNGKVDVDESLFVDNSETELYARVQNLQNIESLADLYQGFVHLQPVIDQYFEANMIMDKDENVKNNRLAQLYAVSELADRLGDLSKLVIK.

The protein belongs to the class-II aminoacyl-tRNA synthetase family. In terms of assembly, tetramer of two alpha and two beta subunits.

The protein localises to the cytoplasm. It catalyses the reaction tRNA(Gly) + glycine + ATP = glycyl-tRNA(Gly) + AMP + diphosphate. In Lactobacillus helveticus (strain DPC 4571), this protein is Glycine--tRNA ligase beta subunit.